We begin with the raw amino-acid sequence, 384 residues long: Organic solute transporter alpha-like protein 1 (384 aa).

Over 1–38 (MEIVKTIIPHNRSYIEPPIPSATEWLANMSVMHVSCLT) the chain is Extracellular. N11 and N28 each carry an N-linked (GlcNAc...) asparagine glycan. Residues 39 to 59 (IACVFVAITFLSSFFHLFFVL) form a helical membrane-spanning segment. Residues 60 to 70 (KYVSNERIRND) lie on the Cytoplasmic side of the membrane. The helical transmembrane segment at 71–91 (MYALIFMFPITTFASLVGMFI) threads the bilayer. The Extracellular segment spans residues 92 to 93 (PR). The chain crosses the membrane as a helical span at residues 94–114 (AAIFLYAVSLVYFMFTLFIMV). At 115-165 (TLLFNIFGGRQEMSAYLLQRNIRVNFTVPPLCFFKFLPTVESTDQNLRRIE) the chain is on the cytoplasmic side. Residues 166–186 (WLVFQTPIIRTLLELVSVVVS) form a helical membrane-spanning segment. Residues 187–202 (MEQEGRRESVWFVFSQ) lie on the Extracellular side of the membrane. A helical transmembrane segment spans residues 203 to 223 (LMALLSMCIAFYGCYVMVPLG). At 224 to 240 (REKHAPYRFDFLFRTCD) the chain is on the cytoplasmic side. A helical transmembrane segment spans residues 241–261 (IAQCIYTIQKFVFEFAAAVGL). Topologically, residues 262–273 (ITSDRYLPAAAK) are extracellular. Residues 274-294 (ALWWASFMCTWEMMLLSALCS) traverse the membrane as a helical segment. The Cytoplasmic portion of the chain corresponds to 295–384 (YCLRPAKCKF…FDSLSQIQGQ (90 aa)).

The protein belongs to the OST-alpha family.

It is found in the cell membrane. Functionally, probable transporter. The protein is Organic solute transporter alpha-like protein 1 (osta-1) of Caenorhabditis elegans.